The chain runs to 108 residues: UPF0060 membrane protein KPK_2870 (108 aa).

4 consecutive transmembrane segments (helical) span residues leucine 6–leucine 26, glycine 29–leucine 49, alanine 61–valine 81, and tyrosine 86–glycine 106.

This sequence belongs to the UPF0060 family.

The protein resides in the cell inner membrane. The chain is UPF0060 membrane protein KPK_2870 from Klebsiella pneumoniae (strain 342).